Consider the following 402-residue polypeptide: Triose phosphate/phosphate translocator, chloroplastic (402 aa).

The N-terminal 72 residues, Met-1 to Pro-72, are a transit peptide targeting the chloroplast. Residues Ala-73–Pro-96 lie on the Chloroplast intermembrane side of the membrane. Residues Ala-97–Leu-117 traverse the membrane as a helical segment. At Asn-118–Tyr-129 the chain is on the lumenal side. The chain crosses the membrane as a helical span at residues Phe-130–Gly-150. Topologically, residues Leu-151–Gln-207 are chloroplast intermembrane. Residues Phe-208–Gly-228 form a helical membrane-spanning segment. Residues Val-229–Asn-272 are Lumenal-facing. A helical membrane pass occupies residues Ile-273–Ile-292. Topologically, residues Glu-293–Gln-370 are chloroplast intermembrane. A helical transmembrane segment spans residues Thr-371–Gln-391. Topologically, residues Ile-392–Ala-402 are lumenal.

The protein belongs to the TPT transporter family. TPT (TC 2.A.7.9) subfamily. As to quaternary structure, homodimer.

It is found in the plastid. It localises to the chloroplast membrane. Its function is as follows. Mediates the export of fixed carbons from the chloroplasts into the cytosol in the form of triose phosphates. This is Triose phosphate/phosphate translocator, chloroplastic from Pisum sativum (Garden pea).